Here is a 188-residue protein sequence, read N- to C-terminus: dCTP deaminase (188 aa).

Lys109–Arg114 lines the dCTP pocket. Catalysis depends on Glu135, which acts as the Proton donor/acceptor. DCTP-binding residues include Gln154, Tyr168, and Gln178.

It belongs to the dCTP deaminase family. Homotrimer.

The enzyme catalyses dCTP + H2O + H(+) = dUTP + NH4(+). The protein operates within pyrimidine metabolism; dUMP biosynthesis; dUMP from dCTP (dUTP route): step 1/2. Catalyzes the deamination of dCTP to dUTP. This is dCTP deaminase from Helicobacter pylori (strain Shi470).